Consider the following 380-residue polypeptide: 4-hydroxy-3-methylbut-2-en-1-yl diphosphate synthase (flavodoxin) (380 aa).

Residues cysteine 279, cysteine 282, cysteine 314, and glutamate 321 each coordinate [4Fe-4S] cluster.

This sequence belongs to the IspG family. Requires [4Fe-4S] cluster as cofactor.

The enzyme catalyses (2E)-4-hydroxy-3-methylbut-2-enyl diphosphate + oxidized [flavodoxin] + H2O + 2 H(+) = 2-C-methyl-D-erythritol 2,4-cyclic diphosphate + reduced [flavodoxin]. It participates in isoprenoid biosynthesis; isopentenyl diphosphate biosynthesis via DXP pathway; isopentenyl diphosphate from 1-deoxy-D-xylulose 5-phosphate: step 5/6. Its function is as follows. Converts 2C-methyl-D-erythritol 2,4-cyclodiphosphate (ME-2,4cPP) into 1-hydroxy-2-methyl-2-(E)-butenyl 4-diphosphate. The sequence is that of 4-hydroxy-3-methylbut-2-en-1-yl diphosphate synthase (flavodoxin) from Tropheryma whipplei (strain TW08/27) (Whipple's bacillus).